The following is a 316-amino-acid chain: MDKENFTRLRGELFCDHPLARYTSWRVGGKAERFYRPADLFDLQDFLTQLPSDEPLTWLGLGSNVLIRDGGIKGTVILTLNRLKELSVVNSQLVFREKSGTEDFFSGNGKTIIRAEAGVTCAKLAKFCVSQGLEDGAFFAGIPGTVGGALAMNAGAFGGETWRTVIGVETMNHQGEILKRTPDEFKIHYRQVEGLENQFFIAGYFCFNHGDPDKAKTAINALLKKRNLSQPIGKYSCGSVFRNPPGDYAARLIESAGLKGKSIGNAEVSEKHANFILNKGNASAADIEALIHYVAQHVSQNHGIQLVKEVHIIGRS.

The 199-residue stretch at 27–225 (VGGKAERFYR…KTAINALLKK (199 aa)) folds into the FAD-binding PCMH-type domain. R190 is a catalytic residue. S239 acts as the Proton donor in catalysis. E309 is a catalytic residue.

Belongs to the MurB family. FAD serves as cofactor.

The protein resides in the cytoplasm. The catalysed reaction is UDP-N-acetyl-alpha-D-muramate + NADP(+) = UDP-N-acetyl-3-O-(1-carboxyvinyl)-alpha-D-glucosamine + NADPH + H(+). Its pathway is cell wall biogenesis; peptidoglycan biosynthesis. Its function is as follows. Cell wall formation. The chain is UDP-N-acetylenolpyruvoylglucosamine reductase from Coxiella burnetii (strain Dugway 5J108-111).